The following is a 52-amino-acid chain: Lantibiotic gallidermin (52 aa).

Residues Met-1 to Arg-30 constitute a propeptide that is removed on maturation. The segment at residues Ser-33–Cys-37 is a cross-link (lanthionine (Ser-Cys)). Residues Thr-38–Cys-41 constitute a cross-link (beta-methyllanthionine (Thr-Cys)). Residue Thr-44 is modified to (Z)-2,3-didehydrobutyrine. The segment at residues Ser-46–Cys-51 is a cross-link (lanthionine (Ser-Cys)). Positions Ser-49–Cys-52 form a cross-link, S-(2-aminovinyl)-D-cysteine (Ser-Cys).

Belongs to the type A lantibiotic family. In terms of processing, maturation of lantibiotics involves the enzymatic conversion of Thr, and Ser into dehydrated AA and the formation of thioether bonds with cysteine. The C-terminal lanthionine undergoes decarboxylation. This is followed by membrane translocation and cleavage of the modified precursor. Post-translationally, the structure of the 2,3-didehydrobutyrine is not discussed in PubMed:1932575. However, in Fig. 5 the NMR model appears to have the Z-isomer.

Its function is as follows. Lanthionine-containing peptide antibiotic (lantibiotic) active on Gram-positive bacteria. The bactericidal activity of lantibiotics is based on depolarization of energized bacterial cytoplasmic membranes, initiated by the formation of aqueous transmembrane pores. This Staphylococcus gallinarum protein is Lantibiotic gallidermin (gdmA).